Reading from the N-terminus, the 255-residue chain is Increased copper sensitivity protein 2 (255 aa).

Residues 1–12 (MGKFEQKERERI) show a composition bias toward basic and acidic residues. Disordered regions lie at residues 1-32 (MGKFEQKERERISTFSFPTTGSQSSTSIKSLG) and 82-142 (PGDK…RKSH). Over residues 13-30 (STFSFPTTGSQSSTSIKS) the composition is skewed to polar residues. Positions 131–142 (SGRRKSYHRKSH) are enriched in basic residues. Ser-217 carries the phosphoserine modification.

The polypeptide is Increased copper sensitivity protein 2 (ICS2) (Saccharomyces cerevisiae (strain ATCC 204508 / S288c) (Baker's yeast)).